An 828-amino-acid polypeptide reads, in one-letter code: Glycerol-3-phosphate acyltransferase 1, mitochondrial (828 aa).

The Cytoplasmic segment spans residues 1–87; it reads MEESSVTIGT…FFNPSIPSLG (87 aa). The segment at 80 to 120 is important for mitochondrial localization; that stretch reads NPSIPSLGLRNVIYINETHTRHRGWLARRLSYILFVQERDV. Residues 88–118 lie within the membrane without spanning it; it reads LRNVIYINETHTRHRGWLARRLSYILFVQER. Topologically, residues 119-828 are cytoplasmic; it reads DVHKGMFATS…LEYILSFVVL (710 aa). An HXXXXD motif motif is present at residues 230–235; sequence HRSHID. Residues Arg278, Arg279, Lys288, Arg293, and Arg328 each contribute to the CoA site. Position 380 is a phosphoserine (Ser380). Arg462 contacts CoA. Phosphoserine is present on residues Ser688 and Ser695. Residues Lys780 and Lys784 each carry the N6-acetyllysine modification.

This sequence belongs to the GPAT/DAPAT family.

It localises to the mitochondrion outer membrane. The enzyme catalyses sn-glycerol 3-phosphate + an acyl-CoA = a 1-acyl-sn-glycero-3-phosphate + CoA. It carries out the reaction sn-glycerol 3-phosphate + hexadecanoyl-CoA = 1-hexadecanoyl-sn-glycero-3-phosphate + CoA. The catalysed reaction is (9Z,12Z)-octadecadienoyl-CoA + sn-glycerol 3-phosphate = 1-(9Z,12Z)-octadecadienoyl-sn-glycero-3-phosphate + CoA. It catalyses the reaction sn-glycerol 3-phosphate + (9Z)-octadecenoyl-CoA = 1-(9Z-octadecenoyl)-sn-glycero-3-phosphate + CoA. The enzyme catalyses sn-glycerol 3-phosphate + octadecanoyl-CoA = 1-octadecanoyl-sn-glycero-3-phosphate + CoA. It carries out the reaction dodecanoyl-CoA + sn-glycerol 3-phosphate = 1-dodecanoyl-sn-glycerol 3-phosphate + CoA. The catalysed reaction is 1-acyl-sn-glycero-3-phospho-(1'-sn-glycerol) + an acyl-CoA = a 1,2-diacyl-sn-glycero-3-phospho-(1'-sn-glycerol) + CoA. Its pathway is phospholipid metabolism; CDP-diacylglycerol biosynthesis; CDP-diacylglycerol from sn-glycerol 3-phosphate: step 1/3. In terms of biological role, mitochondrial membrane protein that catalyzes the essential first step of biosynthesis of glycerolipids such as triglycerides, phosphatidic acids and lysophosphatidic acids. Esterifies acyl-group from acyl-coenzyme A (acyl-CoA) to the sn-1 position of glycerol-3-phosphate, to produce lysophosphatidic acid. Has a narrow hydrophobic binding cleft that selects for a linear acyl chain. Catalytic activity is higher for substrates with a 16-carbon acyl chain. This is Glycerol-3-phosphate acyltransferase 1, mitochondrial from Rattus norvegicus (Rat).